The primary structure comprises 593 residues: SPI-1 type 3 secretion system translocon protein SctE (593 aa).

Coiled-coil stretches lie at residues 151 to 208 (DTAK…ATDA) and 287 to 314 (EGRQAEMEKKSAEFQEETRKAEETNRIM). The next 2 membrane-spanning stretches (helical) occupy residues 330–350 (VVAAVFTGGASLALAAVGLAV) and 409–429 (IVGAIVAAIAMVAVIVVVAVV).

It belongs to the SctE/SipB/YopB family. As to quaternary structure, the core secretion machinery of the T3SS is composed of approximately 20 different proteins, including cytoplasmic components, a base, an export apparatus and a needle. This subunit is involved in the formation of a pore, called the translocon, in host membrane.

It localises to the secreted. It is found in the host membrane. The protein localises to the host cell. In terms of biological role, component of the type III secretion system 1 (SPI-1 T3SS), also called injectisome, which is used to inject bacterial effector proteins into eukaryotic host cells. SipB/SctE1 and SipC/SctB are inserted into the host membrane where they form a pore and allow the translocation of effector proteins into the cytosol of target cells. Functionally, induces macrophage apoptosis either by binding and activating the proapoptotic enzyme caspase-1 (caspase-1 dependent), resulting in the release of interleukin-1 beta active form, or by disrupting mitochondria and inducing autophagy (caspase-1 independent). The former is dependent of its membrane-fusion activity. In Salmonella typhi, this protein is SPI-1 type 3 secretion system translocon protein SctE.